Reading from the N-terminus, the 1148-residue chain is Trafficking protein particle complex subunit 9 (1148 aa).

A phosphoserine mark is found at Ser-566 and Ser-953.

It belongs to the NIBP family. As to quaternary structure, component of the multisubunit TRAPP (transport protein particle) complex, which includes at least TRAPPC2, TRAPPC2L, TRAPPC3, TRAPPC3L, TRAPPC4, TRAPPC5, TRAPPC8, TRAPPC9, TRAPPC10, TRAPPC11 and TRAPPC12. Directly interacts with IKBKB and MAP3K14. Expressed at high levels in muscle and kidney and to a lower extent in brain, heart and placenta.

The protein resides in the golgi apparatus. It is found in the cis-Golgi network. It localises to the endoplasmic reticulum. The protein localises to the cytoplasm. Its function is as follows. Functions as an activator of NF-kappa-B through increased phosphorylation of the IKK complex. May function in neuronal cells differentiation. May play a role in vesicular transport from endoplasmic reticulum to Golgi. This is Trafficking protein particle complex subunit 9 (TRAPPC9) from Homo sapiens (Human).